A 790-amino-acid polypeptide reads, in one-letter code: Cadherin-20 (790 aa).

Residues 1–25 (MSCKRSYHRHCALVYYMVLLDLTNA) form the signal peptide. Residues 26–52 (VFEFSHPLIRDSGNSQSRQLLHHRLKR) constitute a propeptide that is removed on maturation. At 26-612 (VFEFSHPLIR…PYTLPISLSR (587 aa)) the chain is on the extracellular side. Cadherin domains are found at residues 54 to 158 (WVWN…EPKF), 159 to 267 (LDGP…PPRF), 268 to 382 (PQKH…PPVF), 383 to 487 (GSSF…APTF), and 487 to 605 (FTKF…EPYT). N254, N283, N413, N454, and N535 each carry an N-linked (GlcNAc...) asparagine glycan. A helical membrane pass occupies residues 613 to 633 (GALIAILTCIFVLLVLVLLIL). Over 634–790 (SMRRHRKQPY…YGTKDNNGSL (157 aa)) the chain is Cytoplasmic.

Detected in embryonic posterior neural plate, embryonic neural tube, sulcus limitans and embryonic kidney.

It localises to the cell membrane. In terms of biological role, cadherins are calcium-dependent cell adhesion proteins. They preferentially interact with themselves in a homophilic manner in connecting cells; cadherins may thus contribute to the sorting of heterogeneous cell types. This chain is Cadherin-20 (cdh20), found in Xenopus laevis (African clawed frog).